The primary structure comprises 375 residues: Erythronate-4-phosphate dehydrogenase (375 aa).

Serine 49 serves as a coordination point for substrate. Positions 150 and 178 each coordinate NAD(+). Arginine 211 is a catalytic residue. Aspartate 231 serves as a coordination point for NAD(+). Glutamate 236 is a catalytic residue. The active-site Proton donor is the histidine 253. Glycine 256 is a binding site for NAD(+).

The protein belongs to the D-isomer specific 2-hydroxyacid dehydrogenase family. PdxB subfamily. As to quaternary structure, homodimer.

It localises to the cytoplasm. The catalysed reaction is 4-phospho-D-erythronate + NAD(+) = (R)-3-hydroxy-2-oxo-4-phosphooxybutanoate + NADH + H(+). It functions in the pathway cofactor biosynthesis; pyridoxine 5'-phosphate biosynthesis; pyridoxine 5'-phosphate from D-erythrose 4-phosphate: step 2/5. In terms of biological role, catalyzes the oxidation of erythronate-4-phosphate to 3-hydroxy-2-oxo-4-phosphonooxybutanoate. The chain is Erythronate-4-phosphate dehydrogenase from Hydrogenovibrio crunogenus (strain DSM 25203 / XCL-2) (Thiomicrospira crunogena).